The sequence spans 373 residues: ATP phosphoribosyltransferase regulatory subunit (373 aa).

It belongs to the class-II aminoacyl-tRNA synthetase family. HisZ subfamily. In terms of assembly, heteromultimer composed of HisG and HisZ subunits.

The protein resides in the cytoplasm. It participates in amino-acid biosynthesis; L-histidine biosynthesis; L-histidine from 5-phospho-alpha-D-ribose 1-diphosphate: step 1/9. Functionally, required for the first step of histidine biosynthesis. May allow the feedback regulation of ATP phosphoribosyltransferase activity by histidine. This Chelativorans sp. (strain BNC1) protein is ATP phosphoribosyltransferase regulatory subunit.